A 353-amino-acid chain; its full sequence is Keratocan (353 aa).

The N-terminal stretch at methionine 1–threonine 21 is a signal peptide. The region spanning glutamate 34–alanine 72 is the LRRNT domain. Disulfide bonds link cysteine 43-cysteine 49 and cysteine 47-cysteine 59. LRR repeat units lie at residues arginine 73 to asparagine 94, histidine 97 to leucine 118, arginine 123 to valine 143, glycine 144 to asparagine 165, asparagine 168 to threonine 188, serine 194 to alanine 214, asparagine 215 to alanine 236, lysine 239 to valine 262, serine 264 to alanine 283, and histidine 284 to proline 305. Asparagine 94 is a glycosylation site (N-linked (GlcNAc...) (keratan sulfate) asparagine). N-linked (GlcNAc...) asparagine glycosylation is present at asparagine 168. N-linked (GlcNAc...) (keratan sulfate) asparagine glycans are attached at residues asparagine 223 and asparagine 261. The N-linked (GlcNAc...) asparagine glycan is linked to asparagine 299. Cysteine 304 and cysteine 344 are disulfide-bonded.

Belongs to the small leucine-rich proteoglycan (SLRP) family. SLRP class II subfamily. Post-translationally, binds keratan sulfate chains.

The protein localises to the secreted. The protein resides in the extracellular space. Its subcellular location is the extracellular matrix. Its function is as follows. Plays an important role in generating and maintaining a transparent matrix within the corneal stroma. This chain is Keratocan (KERA), found in Gallus gallus (Chicken).